The primary structure comprises 198 residues: MIISAKFITSLVKFDENLSSNFSEVAFLGRSNVGKSSLINSLCKQKNLAKSSATPGKTQLINFFEVTCKRNEEKFNINFIDLPGFGYAKVSKNLKEIWNQNLDEFLKLRTSIKLFIHLIDSRHTHLEIDVNLNDYLKRFLRPDQKILKVFTKCDKLNQSEKAKLKNEFKDSILVSNLNKFGLDSLEDIIIDQTLGLGK.

The EngB-type G domain maps to 21–195; that stretch reads NFSEVAFLGR…EDIIIDQTLG (175 aa). Residues 29–36, 56–60, 81–84, 151–154, and 174–176 each bind GTP; these read GRSNVGKS, GKTQL, DLPG, TKCD, and VSN. Residues S36 and T58 each contribute to the Mg(2+) site.

The protein belongs to the TRAFAC class TrmE-Era-EngA-EngB-Septin-like GTPase superfamily. EngB GTPase family. Requires Mg(2+) as cofactor.

Functionally, necessary for normal cell division and for the maintenance of normal septation. The protein is Probable GTP-binding protein EngB of Campylobacter jejuni subsp. jejuni serotype O:6 (strain 81116 / NCTC 11828).